Consider the following 229-residue polypeptide: MMGSVELNLRETELCLGLPGGDTVAPVTGNKRGFSETVDLKLNLNNEPANKEGSTTHDVVTFDSKEKSACPKDPAKPPAKAQVVGWPPVRSYRKNVMVSCQKSSGGPEAAAFVKVSMDGAPYLRKIDLRMYKSYDELSNALSNMFSSFTMGKHGGEEGMIDFMNERKLMDLVNSWDYVPSYEDKDGDWMLVGDVPWPMFVDTCKRLRLMKGSDAIGLAPRAMEKCKSRA.

Residues 14-18 (LCLGL) carry the EAR-like (transcriptional repression) motif. The PB1 domain occupies 110 to 211 (AAFVKVSMDG…TCKRLRLMKG (102 aa)).

Belongs to the Aux/IAA family. In terms of assembly, homodimers and heterodimers. Interacts with the auxin response factors ARF1 and IAA24. Interacts with IAA1. Interacts with TPL. Interacts (via PB1 domain) with ARF7 (via PB1 domain). In terms of processing, phosphorylated by phytochrome A in vitro.

The protein resides in the nucleus. Functionally, aux/IAA proteins are short-lived transcriptional factors that function as repressors of early auxin response genes at low auxin concentrations. Repression is thought to result from the interaction with auxin response factors (ARFs), proteins that bind to the auxin-responsive promoter element (AuxRE). Formation of heterodimers with ARF proteins may alter their ability to modulate early auxin response genes expression. This chain is Auxin-responsive protein IAA17 (IAA17), found in Arabidopsis thaliana (Mouse-ear cress).